Here is a 552-residue protein sequence, read N- to C-terminus: Carotenoid cleavage dioxygenase 8 homolog A, chloroplastic (552 aa).

A chloroplast-targeting transit peptide spans 1–43 (MATSLTLIATPCTAPRSSSSFALAPRLPPRCSNATAARRRAVR). The tract at residues 32–73 (SNATAARRRAVRATTLQSDQEPAGSGDSGATTTKLSASTSVR) is disordered. Polar residues predominate over residues 59-72 (SGATTTKLSASTSV). His-239, His-289, His-356, and His-543 together coordinate Fe cation.

The protein belongs to the carotenoid oxygenase family. The cofactor is Fe(2+). As to expression, highly expressed in panicles, inflorescences and parenchyma cells of the root stele, and at lower levels in shoot apex, leaf buds and xylem parenchyma cells of the stem.

Its subcellular location is the plastid. It is found in the chloroplast. In terms of biological role, may be involved in strigolactones biosynthesis. This Oryza sativa subsp. japonica (Rice) protein is Carotenoid cleavage dioxygenase 8 homolog A, chloroplastic (CCD8A).